The primary structure comprises 367 residues: Aminomethyltransferase (367 aa).

It belongs to the GcvT family. In terms of assembly, the glycine cleavage system is composed of four proteins: P, T, L and H.

The catalysed reaction is N(6)-[(R)-S(8)-aminomethyldihydrolipoyl]-L-lysyl-[protein] + (6S)-5,6,7,8-tetrahydrofolate = N(6)-[(R)-dihydrolipoyl]-L-lysyl-[protein] + (6R)-5,10-methylene-5,6,7,8-tetrahydrofolate + NH4(+). In terms of biological role, the glycine cleavage system catalyzes the degradation of glycine. The protein is Aminomethyltransferase of Lysinibacillus sphaericus (strain C3-41).